An 87-amino-acid polypeptide reads, in one-letter code: U14-lycotoxin-Ls1b (87 aa).

An N-terminal signal peptide occupies residues 1 to 20; it reads MNSKVFVVLLLLALSTCVLS. One can recognise a WAP domain in the interval 21-66; the sequence is EKYCPTPRNTSCKKMNIRNNCCRDSDCTSNAFCCAEPCGNFCHKAS. 5 cysteine pairs are disulfide-bonded: C24–C54, C32–C58, C41–C53, C42–C80, and C47–C62.

It belongs to the venom protein 11 family. 01 (wap-1) subfamily. In terms of processing, contains 5 disulfide bonds. As to expression, expressed by the venom gland.

It localises to the secreted. Functionally, has antibacterial activity. The chain is U14-lycotoxin-Ls1b from Lycosa singoriensis (Wolf spider).